A 628-amino-acid polypeptide reads, in one-letter code: Alpha-L-arabinofuranosidase A (628 aa).

Residues 1–25 form the signal peptide; the sequence is MVAFSALSGVSAVSLLLSLVQNAHG. N-linked (GlcNAc...) asparagine glycosylation is found at Asn36, Asn51, Asn74, Asn152, Asn171, Asn260, Asn359, Asn440, Asn493, and Asn610.

This sequence belongs to the glycosyl hydrolase 51 family.

It carries out the reaction Hydrolysis of terminal non-reducing alpha-L-arabinofuranoside residues in alpha-L-arabinosides.. It participates in glycan metabolism; L-arabinan degradation. In terms of biological role, acts only on small linear 1,5-alpha-linked L-arabinofuranosyl oligosaccharides. In Aspergillus niger, this protein is Alpha-L-arabinofuranosidase A (abfA).